The sequence spans 432 residues: Killer cell immunoglobulin-like receptor 3DL1 (432 aa).

Positions 1 to 21 (MLLWFLSLVCSGFFLVQRMSA) are cleaved as a signal peptide. Residues 22–335 (HVGSHDKPFL…ADTKTNNYKN (314 aa)) are Extracellular-facing. Ig-like C2-type domains follow at residues 42–100 (GQNV…HPQY), 135–202 (GGNV…NSYY), and 238–301 (GETM…FRNA). Asparagine 44 carries N-linked (GlcNAc...) asparagine glycosylation. Cysteine 49 and cysteine 95 are oxidised to a cystine. Asparagine 137 carries an N-linked (GlcNAc...) asparagine glycan. Disulfide bonds link cysteine 142-cysteine 195 and cysteine 245-cysteine 294. N-linked (GlcNAc...) asparagine glycosylation occurs at asparagine 300. The helical transmembrane segment at 336–356 (LHILTGLLVTMVLVVIIIFYS) threads the bilayer. Topologically, residues 357-432 (CYFSKQNKSQ…DTIVYMEIMK (76 aa)) are cytoplasmic.

It belongs to the immunoglobulin superfamily.

The protein localises to the cell membrane. Receptor on natural killer (NK) cells. Inhibits the activity of NK cells thus preventing cell lysis. This Mus musculus (Mouse) protein is Killer cell immunoglobulin-like receptor 3DL1 (Kir3dl1).